The following is a 162-amino-acid chain: MARVEL domain-containing protein 1 (162 aa).

At 1-17 the chain is on the cytoplasmic side; the sequence is MPTQPQEKRSFLQFLKS. In terms of domain architecture, MARVEL spans 14-155; the sequence is FLKSFVGIVR…SGIYCSCRKC (142 aa). Residues 18–38 traverse the membrane as a helical segment; that stretch reads FVGIVRVLQILLGAGLWVTIA. Over 39–47 the chain is Extracellular; it reads ANKYEGSIH. The chain crosses the membrane as a helical span at residues 48-68; sequence FVLFVAVLFWLLTLAIFILTL. Topologically, residues 69 to 86 are cytoplasmic; that stretch reads LDKQDLVPIVGGERWLLS. The helical transmembrane segment at 87-107 threads the bilayer; sequence NLIHDVVATLLYLSTIGIMIY. Topologically, residues 108 to 127 are extracellular; it reads KTQKNSYCNLDVYKHHCLYK. Residues 128 to 148 form a helical membrane-spanning segment; sequence VYLTASVFACLTAAVYLLSGI. Over 149–162 the chain is Cytoplasmic; the sequence is YCSCRKCRGERTVV.

It is found in the membrane. The protein localises to the nucleus. In Danio rerio (Zebrafish), this protein is MARVEL domain-containing protein 1 (marveld1).